The sequence spans 354 residues: Petrobactin import system permease protein FatC (354 aa).

A run of 9 helical transmembrane segments spans residues 37–57 (YWIVLITLIALGLLSSYGLLV), 77–97 (IVAIVAMIIAAVCHSLSTVAF), 116–136 (LYSAIQTSTVFFFGASALINF), 141–161 (SFLFQVVVMVFMSLILYGWLL), 168–188 (LQLMLLVGIIIGTGLNSVSTF), 214–234 (PAYFPIVIPMIIIVAVLIFAH), 259–279 (VIYTLVLVAILMSISTALIGP), 302–322 (YIFPMAFAIGFLIMTSAYFLM), and 329–349 (QGVVSVIIELFGGIIFLTIVL).

It belongs to the binding-protein-dependent transport system permease family. FecCD subfamily. The complex is composed of two ATP-binding proteins (FatE), two transmembrane proteins (FatC and FatD) and a solute-binding protein (FpuA).

It is found in the cell membrane. Its function is as follows. Part of an ABC transporter complex involved in ferric-petrobactin uptake. Probably responsible for the translocation of the substrate across the membrane. This Bacillus anthracis protein is Petrobactin import system permease protein FatC.